Here is a 419-residue protein sequence, read N- to C-terminus: Gamma-glutamyl phosphate reductase (419 aa).

Belongs to the gamma-glutamyl phosphate reductase family.

Its subcellular location is the cytoplasm. The catalysed reaction is L-glutamate 5-semialdehyde + phosphate + NADP(+) = L-glutamyl 5-phosphate + NADPH + H(+). It functions in the pathway amino-acid biosynthesis; L-proline biosynthesis; L-glutamate 5-semialdehyde from L-glutamate: step 2/2. In terms of biological role, catalyzes the NADPH-dependent reduction of L-glutamate 5-phosphate into L-glutamate 5-semialdehyde and phosphate. The product spontaneously undergoes cyclization to form 1-pyrroline-5-carboxylate. This Syntrophomonas wolfei subsp. wolfei (strain DSM 2245B / Goettingen) protein is Gamma-glutamyl phosphate reductase.